The chain runs to 315 residues: MTAEIAKFGHIALITPNLEKSVWFFRDIVGLEEVDRQGDTIFLRAWGDWEHHTLSLTPGNRARVDHIAWRTKRPEDVETFAEQLKAKGTEVQWIEPGEEKGQGKAIRFRLPNGYPFEIYYDVEKPKAPEGKKSRLKNNVYRPSYGIAPRRIDHVNVWTTNPSEIHQWLKDNMGFKMREYIRLNNGFVAGGWMSVTPLVHDIGVMVDPKGQPNRLHHFAYYLDNVTDILRAADILREHDITIEMGGPGRHGISQAFFLYVKDPGSGHRLELFSGGYLIFDPDWEPIEWQEHELQEGLIWYGPEMKPGGPMDDTTEC.

VOC domains follow at residues 7–121 and 150–273; these read KFGH…IYYD and RIDH…LFSG. H153, H216, and E269 together coordinate Mn(2+).

Belongs to the extradiol ring-cleavage dioxygenase family. As to quaternary structure, homotetramer. Mn(2+) is required as a cofactor.

The enzyme catalyses biphenyl-2,3-diol + O2 = 2-hydroxy-6-oxo-6-phenylhexa-2,4-dienoate + H(+). Its pathway is xenobiotic degradation; biphenyl degradation; 2-hydroxy-2,4-pentadienoate and benzoate from biphenyl: step 3/4. Its function is as follows. Catalyzes the meta-cleavage of the hydroxylated biphenyl ring. The enzyme can oxidize a wide range of substrates, and the substrate preference order is 2,3-dihydroxybiphenyl &gt; 3-methylcatechol &gt; catechol &gt; 4-methylcatechol &gt; 4-chlorocatechol. The protein is Manganese-dependent 2,3-dihydroxybiphenyl 1,2-dioxygenase (bphC) of Geobacillus genomosp. 3.